A 320-amino-acid chain; its full sequence is tRNA N6-adenosine threonylcarbamoyltransferase (320 aa).

Positions 114 and 118 each coordinate Fe cation. Residues 136 to 140 (VVSGG), D169, G182, D186, and N273 contribute to the substrate site. D297 lines the Fe cation pocket.

The protein belongs to the KAE1 / TsaD family. Fe(2+) serves as cofactor.

The protein localises to the cytoplasm. It catalyses the reaction L-threonylcarbamoyladenylate + adenosine(37) in tRNA = N(6)-L-threonylcarbamoyladenosine(37) in tRNA + AMP + H(+). Required for the formation of a threonylcarbamoyl group on adenosine at position 37 (t(6)A37) in tRNAs that read codons beginning with adenine. Is involved in the transfer of the threonylcarbamoyl moiety of threonylcarbamoyl-AMP (TC-AMP) to the N6 group of A37, together with TsaE and TsaB. TsaD likely plays a direct catalytic role in this reaction. In Ureaplasma parvum serovar 3 (strain ATCC 27815 / 27 / NCTC 11736), this protein is tRNA N6-adenosine threonylcarbamoyltransferase.